A 265-amino-acid chain; its full sequence is Shikimate dehydrogenase (NADP(+)) (265 aa).

Residues 14-16 (SLS) and threonine 61 each bind shikimate. Catalysis depends on lysine 65, which acts as the Proton acceptor. Shikimate is bound by residues asparagine 85 and aspartate 100. NADP(+) contacts are provided by residues 123–127 (GAGGA), 146–151 (NRTESK), and alanine 209. Residue tyrosine 211 participates in shikimate binding. An NADP(+)-binding site is contributed by glycine 232.

It belongs to the shikimate dehydrogenase family. As to quaternary structure, homodimer.

It catalyses the reaction shikimate + NADP(+) = 3-dehydroshikimate + NADPH + H(+). It participates in metabolic intermediate biosynthesis; chorismate biosynthesis; chorismate from D-erythrose 4-phosphate and phosphoenolpyruvate: step 4/7. Involved in the biosynthesis of the chorismate, which leads to the biosynthesis of aromatic amino acids. Catalyzes the reversible NADPH linked reduction of 3-dehydroshikimate (DHSA) to yield shikimate (SA). The polypeptide is Shikimate dehydrogenase (NADP(+)) (Haloarcula marismortui (strain ATCC 43049 / DSM 3752 / JCM 8966 / VKM B-1809) (Halobacterium marismortui)).